Consider the following 432-residue polypeptide: MNLQTQKINSANATAKGTLEKALLEEKLDKLSKDAAKNLKVDGFRKGKVPAGVIKARYGEKLQEDAEREALQELLDAALKDLGAEPSQLIGDPRITEYNKHDNGIDVEVKIGLAPEITLQESLTYVPGFELPSVSEEEINTRLMELAKAKAPLAPAPEGKALENGDFAKIDFEGFLGEEAFEGGKAEDYMLQIGSKSFIPGFEDQLIGMKAGEKRDIQVKFPENYGSEKLAGQEATFKIALKEIQVKAPQEPSDEFAKSVLPEEPEANLNLLKEKIKEQIATEKKVELYNSELKTKLVDNLVEALAFDLPELVVEQEIDLVFRNTLSSLSKEEIEALRNDQEAVKAKREEHRESATRSVKVTFIVDALAKKEGIAVQDNELIQTIYYESMAMGQDPKAMLEYYKNNNLLPAVRMAMLEDKLLTHLLDQKIKG.

The 86-residue stretch at 165-250 (GDFAKIDFEG…LKEIQVKAPQ (86 aa)) folds into the PPIase FKBP-type domain.

This sequence belongs to the FKBP-type PPIase family. Tig subfamily.

It is found in the cytoplasm. The catalysed reaction is [protein]-peptidylproline (omega=180) = [protein]-peptidylproline (omega=0). Its function is as follows. Involved in protein export. Acts as a chaperone by maintaining the newly synthesized protein in an open conformation. Functions as a peptidyl-prolyl cis-trans isomerase. This Wolinella succinogenes (strain ATCC 29543 / DSM 1740 / CCUG 13145 / JCM 31913 / LMG 7466 / NCTC 11488 / FDC 602W) (Vibrio succinogenes) protein is Trigger factor.